The following is a 684-amino-acid chain: Coiled-coil domain-containing protein 62 (684 aa).

Coiled coils occupy residues 11 to 160 (RQNI…QALT) and 199 to 322 (TCIV…ESKA). Residues 579 to 603 (SLGSSKSALREDETESSSNKKNSPT) form a disordered region. Polar residues predominate over residues 594-603 (SSSNKKNSPT). 2 short sequence motifs (LXXLL motif) span residues 634–638 (LQRLL) and 650–654 (LSTLL). The tract at residues 657-684 (SHENLTGSATNKSEVPEESAQKNTFVSY) is disordered. A compositionally biased stretch (polar residues) spans 659-669 (ENLTGSATNKS).

Interacts with ESR1 and ESR2 in the presence of estradiol/E2. The interaction with ESR2 recruits CCDC62 to ER target genes, including cyclin-D1/CCND1 AP-1 promoter. Interacts with GOPC. Highly expressed in adult testis. Expressed in both prostate epithelial and stromal cells, with predominant expression in epithelial cells (at protein level). Not detected in prostate by RT-PCR. Overexpressed in various cancers.

Its subcellular location is the cytoplasm. It localises to the nucleus. The protein resides in the cytoplasmic vesicle. The protein localises to the secretory vesicle. It is found in the acrosome. Its function is as follows. Nuclear receptor coactivator that can enhance preferentially estrogen receptors ESR1 and ESR2 transactivation. Also modulates progesterone/PGR, glucocorticoid/NR3C1 and androgen/AR receptors transactivation, although at lower level; little effect on vitamin D receptor/VDR. Required for normal spermiogenesis. It probably plays a role in acrosome formation. This Homo sapiens (Human) protein is Coiled-coil domain-containing protein 62 (CCDC62).